A 1530-amino-acid polypeptide reads, in one-letter code: Multidrug resistance-associated protein 1 (1530 aa).

The Extracellular portion of the chain corresponds to 1 to 33 (MALRDFCSVDGSDLFWEWNVTWNTSNPDFTKCF). N19 is a glycosylation site (N-linked (GlcNAc...) asparagine). The chain crosses the membrane as a helical span at residues 34 to 54 (QNTVLVWVPCSYLWVCFPFYF). Residues 55–74 (LYLSHHDRGYIQMTHLNKAK) are Cytoplasmic-facing. The chain crosses the membrane as a helical span at residues 75–95 (TALGFLLWIVCWADLFYSFWE). The Extracellular segment spans residues 96–100 (RSMGK). The helical transmembrane segment at 101 to 121 (LLAPVFLVSPTLLGITMLLAT) threads the bilayer. Over 122–133 (FLIQIERRRGVQ) the chain is Cytoplasmic. A helical transmembrane segment spans residues 134-154 (SSGIMLTFWLIALLCALAILR). Residues 155–172 (SKIMTALKEDARVDVFRD) are Extracellular-facing. A helical membrane pass occupies residues 173-193 (VTFYIYFSLVLIQLVLSCFSD). The Cytoplasmic portion of the chain corresponds to 194-316 (RSPLFSETIN…KERDPSLFKV (123 aa)). The residue at position 277 (Y277) is a Phosphotyrosine. Position 289 is a phosphoserine (S289). Residues 317–337 (LYKTFGPYFLMSFLFKAVHDL) form a helical membrane-spanning segment. The ABC transmembrane type-1 1 domain maps to 325–608 (FLMSFLFKAV…LPMVISSIVQ (284 aa)). Topologically, residues 338 to 363 (MMFAGPEILKLLINFVNDKKAPEWQG) are extracellular. Residues 364–384 (YFYTALLFISACLQTLVLHQY) traverse the membrane as a helical segment. At 385 to 440 (FHICFVSGMRIKTAVIGAVYRKALVITNAARKSSTVGEIVNLMSVDAQRFMDLATY) the chain is on the cytoplasmic side. A helical transmembrane segment spans residues 441 to 461 (INMIWSAPLQVILALYLLWLN). At 462–464 (LGP) the chain is on the extracellular side. The helical transmembrane segment at 465-485 (SVLAGVAVMVLMVPLNAVMAM) threads the bilayer. At 486-547 (KTKTYQVAHM…VLKKSAYLAA (62 aa)) the chain is on the cytoplasmic side. Position 503 is an N6-succinyllysine (K503). The helical transmembrane segment at 548–568 (VGTFTWVCTPFLVALSTFAVY) threads the bilayer. The Extracellular segment spans residues 569–590 (VTVDENNILDAQKAFVSLALFN). Residues 591–611 (ILRFPLNILPMVISSIVQASV) form a helical membrane-spanning segment. The Cytoplasmic portion of the chain corresponds to 612–966 (SLKRLRVFLS…VKLSVYWDYM (355 aa)). An ABC transporter 1 domain is found at 644 to 868 (ITVKNATFTW…DGAFAEFLRT (225 aa)). Residue 678 to 685 (GQVGCGKS) coordinates ATP. The tract at residues 912–939 (RQLSSSSSYSRDVSQHHTSTAELRKPGP) is disordered. Phosphoserine is present on residues S915 and S930. Residues 967–987 (KAIGLFISFLSIFLFLCNHVA) form a helical membrane-spanning segment. The 282-residue stretch at 974–1255 (SFLSIFLFLC…LVRMSSEMET (282 aa)) folds into the ABC transmembrane type-1 2 domain. The Extracellular segment spans residues 988–1024 (SLVSNYWLSLWTDDPIVNGTQEHTQVRLSVYGALGIS). N-linked (GlcNAc...) asparagine glycosylation is present at N1005. A helical transmembrane segment spans residues 1025–1045 (QGITVFGYSMAVSIGGIFASR). Topologically, residues 1046–1088 (RLHLDLLHNVLRSPISFFERTPSGNLVNRFSKELDTVDSMIPQ) are cytoplasmic. A helical membrane pass occupies residues 1089–1109 (VIKMFMGSLFNVIGACIIILL). Position 1110 (A1110) is a topological domain, extracellular. Residues 1111–1131 (TPMAAVIIPPLGLIYFFVQRF) traverse the membrane as a helical segment. Topologically, residues 1132–1202 (YVASSRQLKR…VANRWLAVRL (71 aa)) are cytoplasmic. Residues 1203 to 1223 (ECVGNCIVLFASLFAVISRHS) form a helical membrane-spanning segment. Over 1224–1225 (LS) the chain is Extracellular. Residues 1226–1246 (AGLVGLSVSYSLQVTTYLNWL) traverse the membrane as a helical segment. Over 1247-1530 (VRMSSEMETN…YSMAKDSGLV (284 aa)) the chain is Cytoplasmic. Positions 1292–1526 (VEFRDYGLRY…RGLFYSMAKD (235 aa)) constitute an ABC transporter 2 domain. Residue 1326–1333 (GRTGAGKS) participates in ATP binding.

It belongs to the ABC transporter superfamily. ABCC family. Conjugate transporter (TC 3.A.1.208) subfamily. As to expression, expressed in heart, spleen, lung, kidney, skeletal muscle, mammary gland and weaker in brain and liver.

It localises to the cell membrane. The protein localises to the basolateral cell membrane. It catalyses the reaction ATP + H2O + xenobioticSide 1 = ADP + phosphate + xenobioticSide 2.. The enzyme catalyses an S-substituted glutathione(in) + ATP + H2O = an S-substituted glutathione(out) + ADP + phosphate + H(+). It carries out the reaction sphing-4-enine 1-phosphate(in) + ATP + H2O = sphing-4-enine 1-phosphate(out) + ADP + phosphate + H(+). The catalysed reaction is leukotriene C4(in) + ATP + H2O = leukotriene C4(out) + ADP + phosphate + H(+). It catalyses the reaction 17beta-estradiol 17-O-(beta-D-glucuronate)(in) + ATP + H2O = 17beta-estradiol 17-O-(beta-D-glucuronate)(out) + ADP + phosphate + H(+). The enzyme catalyses daunorubicin(in) + ATP + H2O = daunorubicin(out) + ADP + phosphate + H(+). It carries out the reaction vincristine(in) + ATP + H2O = vincristine(out) + ADP + phosphate + H(+). The catalysed reaction is 2',3'-cGAMP(in) + ATP + H2O = 2',3'-cGAMP(out) + ADP + phosphate + H(+). It catalyses the reaction S-[(2E,6E,10E)-geranylgeranyl]-L-glutathione(in) + ATP + H2O = S-[(2E,6E,10E)-geranylgeranyl]-L-glutathione(out) + ADP + phosphate + H(+). The enzyme catalyses prostaglandin A2-S-(R)-glutathione(in) + ATP + H2O = prostaglandin A2-S-(R)-glutathione(out) + ADP + phosphate + H(+). It carries out the reaction prostaglandin A2-S-(S)-glutathione(in) + ATP + H2O = prostaglandin A2-S-(S)-glutathione(out) + ADP + phosphate + H(+). With respect to regulation, MK 571 inhibits sphingosine 1-phosphate and leukotriene C4 export. Its function is as follows. Mediates export of organic anions and drugs from the cytoplasm. Mediates ATP-dependent transport of glutathione and glutathione conjugates, leukotriene C4, estradiol-17-beta-o-glucuronide, methotrexate, antiviral drugs and other xenobiotics. Confers resistance to anticancer drugs by decreasing accumulation of drug in cells, and by mediating ATP- and GSH-dependent drug export. Hydrolyzes ATP with low efficiency. Catalyzes the export of sphingosine 1-phosphate from mast cells independently of their degranulation. Participates in inflammatory response by allowing export of leukotriene C4 from leukotriene C4-synthesizing cells. Mediates ATP-dependent, GSH-independent cyclic GMP-AMP (cGAMP) export. Thus, by limiting intracellular cGAMP concentrations negatively regulates the cGAS-STING pathway. Exports S-geranylgeranyl-glutathione (GGG) in lymphoid cells and stromal compartments of lymphoid organs. ABCC1 (via extracellular transport) with GGT5 (via GGG catabolism) establish GGG gradients within lymphoid tissues to position P2RY8-positive lymphocytes at germinal centers in lymphoid follicles and restrict their chemotactic transmigration from blood vessels to the bone marrow parenchyma. Mediates basolateral export of GSH-conjugated R- and S-prostaglandin A2 diastereomers in polarized epithelial cells. The polypeptide is Multidrug resistance-associated protein 1 (Bos taurus (Bovine)).